The following is a 760-amino-acid chain: Catecholate siderophore receptor Fiu (760 aa).

The signal sequence occupies residues 1–31 (MENNRNFPARQFHSLTFFAGLCIGITPVAQA). Residues 67–175 (PVADTTRTMT…PTGSINMISK (109 aa)) form the TBDR plug domain. The 581-residue stretch at 180 to 760 (DSGIDASASI…TFLLTANMHF (581 aa)) folds into the TBDR beta-barrel domain. The TonB C-terminal box motif lies at 743–760 (RYHPGEPRTFLLTANMHF).

It belongs to the TonB-dependent receptor family.

It is found in the cell outer membrane. In terms of biological role, involved in the active transport across the outer membrane of iron complexed with catecholate siderophores such as dihydroxybenzoylserine and dihydroxybenzoate. It derives its energy for transport by interacting with the trans-periplasmic membrane protein TonB. Can also transport catechol-substituted cephalosporins. Receptor for microcins M, H47 and E492. The chain is Catecholate siderophore receptor Fiu (fiu) from Escherichia coli (strain K12).